A 188-amino-acid chain; its full sequence is Elongation factor P-like protein (188 aa).

Belongs to the elongation factor P family.

The chain is Elongation factor P-like protein from Vibrio vulnificus (strain CMCP6).